A 296-amino-acid polypeptide reads, in one-letter code: Tyrosine recombinase XerC (296 aa).

Positions Met-1–Met-84 constitute a Core-binding (CB) domain. Residues Tyr-105–Leu-286 form the Tyr recombinase domain. Residues Arg-145, Lys-169, His-238, Arg-241, and His-264 contribute to the active site. Catalysis depends on Tyr-273, which acts as the O-(3'-phospho-DNA)-tyrosine intermediate.

It belongs to the 'phage' integrase family. XerC subfamily. Forms a cyclic heterotetrameric complex composed of two molecules of XerC and two molecules of XerD.

The protein resides in the cytoplasm. In terms of biological role, site-specific tyrosine recombinase, which acts by catalyzing the cutting and rejoining of the recombining DNA molecules. The XerC-XerD complex is essential to convert dimers of the bacterial chromosome into monomers to permit their segregation at cell division. It also contributes to the segregational stability of plasmids. In Staphylococcus carnosus (strain TM300), this protein is Tyrosine recombinase XerC.